Consider the following 121-residue polypeptide: Protein yippee-like At3g55890 (121 aa).

One can recognise a Yippee domain in the interval 12-109; the sequence is NIYICKLCKT…LELYKISGPH (98 aa). Residues C16, C19, C72, and C75 each contribute to the Zn(2+) site.

Belongs to the yippee family.

The polypeptide is Protein yippee-like At3g55890 (Arabidopsis thaliana (Mouse-ear cress)).